Consider the following 41-residue polypeptide: Alpha-conotoxin-like Pu1.2 (41 aa).

A propeptide spanning residues 1 to 21 (LDGRNAAADFETSDLLAMTIR) is cleaved from the precursor. 2 disulfide bridges follow: Cys-24–Cys-30 and Cys-25–Cys-37. Cys-37 carries the post-translational modification Cysteine amide. The propeptide occupies 38–41 (GGKR).

The protein belongs to the conotoxin A superfamily. Post-translationally, non-native isomers 'ribbon' (with disulfide connectivity C1-C4, C2-C3) and 'beads' (with disulfide connectivity C1-C2, C3-C4) also inhibit high voltage-activated (HVA) calcium channel currents in rat DRG neurons (25-30% inhibition at 1 uM toxin). Mutants Pu1.2(9-16), [C3S; C9S]Pu1.2 and [C4S]Pu1.2(1-9) are all C-terminally amidated. As to expression, expressed by the venom duct.

It is found in the secreted. Its function is as follows. Alpha-conotoxins act on postsynaptic membranes, they bind to the nicotinic acetylcholine receptors (nAChR) and thus inhibit them. This toxin also inhibits high voltage-activated (HVA) calcium channel currents in rat DRG neurons (27% inhibition at 1 uM toxin) probably by activating GABA(B) receptors (GABBR1 and/or GABBR2). The sequence is that of Alpha-conotoxin-like Pu1.2 from Conus pulicarius (Flea-bitten cone).